Here is a 1239-residue protein sequence, read N- to C-terminus: Zinc finger and BTB domain-containing protein 40 (1239 aa).

Residues 24-87 form the BTB domain; that stretch reads CDCTISIGTI…MYTGKLPVGK (64 aa). Disordered regions lie at residues 130 to 231, 687 to 732, and 779 to 801; these read SAPS…TSTE, HLEA…PDPA, and KELD…PKKK. Over residues 136-145 the composition is skewed to basic and acidic residues; sequence TFRKEPEKPQ. Polar residues predominate over residues 181–199; the sequence is SVSQEMSVNSPTAQESQRN. S190 is modified (phosphoserine). Low complexity predominate over residues 200–212; that stretch reads AETPAETPTTAEA. The segment covering 687-703 has biased composition (basic and acidic residues); that stretch reads HLEANNKEDEKAAKEDS. S703 is subject to Phosphoserine. Polar residues predominate over residues 705-719; sequence PGEQNDQGETGSLPG. 10 consecutive C2H2-type zinc fingers follow at residues 807–830, 836–858, 864–887, 893–915, 921–944, 950–973, 978–1000, 1006–1029, 1046–1069, and 1075–1098; these read VTCD…LTEH, FSCE…LRLH, FMCK…KKKH, YACQ…VRTH, YVCR…HTFH, YDCK…HEVH, HPCP…VVTH, FSCG…RTHH, LQCS…KAEH, and HECD…KCQH. A Glycyl lysine isopeptide (Lys-Gly) (interchain with G-Cter in SUMO2) cross-link involves residue K1066. Residues 1104 to 1127 form a C2H2-type 11; atypical zinc finger; the sequence is FRCLYCAATFRFPGALQHHVTTEH. The segment at 1135–1158 adopts a C2H2-type 12 zinc-finger fold; the sequence is FPCELCGELFTSQAQLDSHLESEH.

This sequence belongs to the krueppel C2H2-type zinc-finger protein family.

The protein resides in the nucleus. May be involved in transcriptional regulation. In Homo sapiens (Human), this protein is Zinc finger and BTB domain-containing protein 40 (ZBTB40).